The sequence spans 308 residues: Probable GTP 3',8-cyclase (308 aa).

The Radical SAM core domain occupies 4 to 224 (RFGRPLEDLR…QIRKKHFRPR (221 aa)). A GTP-binding site is contributed by arginine 13. Cysteine 20, cysteine 24, and cysteine 27 together coordinate [4Fe-4S] cluster. A GTP-binding site is contributed by lysine 60. Residue glycine 64 participates in S-adenosyl-L-methionine binding. A GTP-binding site is contributed by threonine 90. Serine 114 is a binding site for S-adenosyl-L-methionine. Lysine 151 is a GTP binding site. Positions 245 and 248 each coordinate [4Fe-4S] cluster. 250-252 (RIR) contributes to the GTP binding site. Cysteine 262 provides a ligand contact to [4Fe-4S] cluster.

This sequence belongs to the radical SAM superfamily. MoaA family. Requires [4Fe-4S] cluster as cofactor.

It carries out the reaction GTP + AH2 + S-adenosyl-L-methionine = (8S)-3',8-cyclo-7,8-dihydroguanosine 5'-triphosphate + 5'-deoxyadenosine + L-methionine + A + H(+). It functions in the pathway cofactor biosynthesis; molybdopterin biosynthesis. In terms of biological role, catalyzes the cyclization of GTP to (8S)-3',8-cyclo-7,8-dihydroguanosine 5'-triphosphate. In Saccharolobus islandicus (strain M.16.27) (Sulfolobus islandicus), this protein is Probable GTP 3',8-cyclase.